Reading from the N-terminus, the 404-residue chain is Serine/threonine transporter SstT (404 aa).

Transmembrane regions (helical) follow at residues 11–31, 44–64, 82–102, 144–164, 179–199, 218–238, 290–310, 316–336, and 363–383; these read IINANLVLQIIFGIAAGIILA, LGGLFVGALKAVAPILVFVLV, IISLYLIGTLLAALTAVTMSF, TANYIGILAWAIGLGIALHHA, VSFIVRFIIRLAPIGIFGLVA, GVLLGSMAIVALVINPLMVFI, IPLGATINMAGAAITITVLTL, MGIQVDMFTALLLSVVAAISA, and VAMQVVGVGFIIGVIQDSAET.

The protein belongs to the dicarboxylate/amino acid:cation symporter (DAACS) (TC 2.A.23) family.

It localises to the cell inner membrane. It carries out the reaction L-serine(in) + Na(+)(in) = L-serine(out) + Na(+)(out). The catalysed reaction is L-threonine(in) + Na(+)(in) = L-threonine(out) + Na(+)(out). Functionally, involved in the import of serine and threonine into the cell, with the concomitant import of sodium (symport system). The chain is Serine/threonine transporter SstT from Desulfotalea psychrophila (strain LSv54 / DSM 12343).